A 1053-amino-acid chain; its full sequence is uncharacterized protein (1053 aa).

Belongs to the mycobacterial PPE family.

This is an uncharacterized protein from Mycobacterium tuberculosis (strain ATCC 25618 / H37Rv).